A 523-amino-acid chain; its full sequence is Cytochrome P450 52A3-B (523 aa).

The chain crosses the membrane as a helical span at residues 17–34; the sequence is WYTILFGAAFTYFLSIAL. Cys-471 lines the heme pocket.

This sequence belongs to the cytochrome P450 family. Requires heme as cofactor.

It localises to the membrane. In terms of biological role, together with an NADPH cytochrome P450 the enzyme system catalyzes the terminal hydroxylation as the first step in the assimilation of alkanes and fatty acids. This is Cytochrome P450 52A3-B (CYP52A3-B) from Candida maltosa (Yeast).